We begin with the raw amino-acid sequence, 236 residues long: Pyridoxal 5'-phosphate synthase subunit PdxT (236 aa).

61–63 is a binding site for L-glutamine; sequence GES. The active-site Nucleophile is the Cys-93. Residues Arg-127 and 163-164 contribute to the L-glutamine site; that span reads IR. Catalysis depends on charge relay system residues His-215 and Glu-217.

It belongs to the glutaminase PdxT/SNO family. As to quaternary structure, in the presence of PdxS, forms a dodecamer of heterodimers. Only shows activity in the heterodimer.

The catalysed reaction is aldehydo-D-ribose 5-phosphate + D-glyceraldehyde 3-phosphate + L-glutamine = pyridoxal 5'-phosphate + L-glutamate + phosphate + 3 H2O + H(+). It carries out the reaction L-glutamine + H2O = L-glutamate + NH4(+). The protein operates within cofactor biosynthesis; pyridoxal 5'-phosphate biosynthesis. Functionally, catalyzes the hydrolysis of glutamine to glutamate and ammonia as part of the biosynthesis of pyridoxal 5'-phosphate. The resulting ammonia molecule is channeled to the active site of PdxS. This chain is Pyridoxal 5'-phosphate synthase subunit PdxT, found in Pseudarthrobacter chlorophenolicus (strain ATCC 700700 / DSM 12829 / CIP 107037 / JCM 12360 / KCTC 9906 / NCIMB 13794 / A6) (Arthrobacter chlorophenolicus).